The primary structure comprises 325 residues: MANLRELRDRIRSVNSTKKITKAQELIATSRITKAQARVEASQPYATEIHKVMERLAAASSLEHPMLREREGGKRAAVLVVSSDRGMAGGYNYNVFKKAAELEKLLEENGYEVVRYVTGNKGVGYYKFRGQEVAGAWTGFSQDPSWEETHDVRRHLIDGFNASSNGTARYRDGLNTDEGQEIQGFDQVHVVYTEFESMLTQTARAHQLLPIEPVIETVEIPEADGILDQSGEPTPDVEFEPDADTLLEALLPQYVSRSLFAMFLEAAAAESASRRNAMKSATDNATALVKDLSRVANQARQAQITQEITEIVGGASALGDSGESD.

This sequence belongs to the ATPase gamma chain family. In terms of assembly, F-type ATPases have 2 components, CF(1) - the catalytic core - and CF(0) - the membrane proton channel. CF(1) has five subunits: alpha(3), beta(3), gamma(1), delta(1), epsilon(1). CF(0) has three main subunits: a, b and c.

It is found in the cell membrane. In terms of biological role, produces ATP from ADP in the presence of a proton gradient across the membrane. The gamma chain is believed to be important in regulating ATPase activity and the flow of protons through the CF(0) complex. The protein is ATP synthase gamma chain of Corynebacterium diphtheriae (strain ATCC 700971 / NCTC 13129 / Biotype gravis).